The primary structure comprises 527 residues: T-complex protein 1 subunit beta (527 aa).

N-acetylserine is present on Ser-2.

Belongs to the TCP-1 chaperonin family. As to quaternary structure, heterooligomeric complex of about 850 to 900 kDa that forms two stacked rings, 12 to 16 nm in diameter. Interacts with PLP2; this interaction leads to inhibition of CCT complex mediated actin folding.

The protein resides in the cytoplasm. Its function is as follows. Molecular chaperone; assists the folding of proteins upon ATP hydrolysis. Known to play a role, in vitro, in the folding of actin and tubulin. In yeast may play a role in mitotic spindle formation. This is T-complex protein 1 subunit beta (CCT2) from Saccharomyces cerevisiae (strain ATCC 204508 / S288c) (Baker's yeast).